Consider the following 125-residue polypeptide: MKPNYSVNTAPKRSDEPIWWGLFGAGGTWFAMITPITVLVLGILVPLGVIDAEAMSYERVSEFATSIIGALFIIGTLALPMWHAMHRVHHGMHDLKFHTGVVGKIACYAFAGLISALAVVFIFMI.

3 helical membrane-spanning segments follow: residues Phe30 to Ile50, Phe63 to His83, and Ile105 to Ile125.

Belongs to the FrdD family. Part of an enzyme complex containing four subunits: a flavoprotein (FrdA), an iron-sulfur protein (FrdB), and two hydrophobic anchor proteins (FrdC and FrdD).

The protein resides in the cell inner membrane. Anchors the catalytic components of the fumarate reductase complex to the cell membrane, binds quinones. The chain is Fumarate reductase subunit D from Vibrio campbellii (strain ATCC BAA-1116).